The following is a 436-amino-acid chain: GTPase Der (436 aa).

2 consecutive EngA-type G domains span residues 4-167 and 176-351; these read PVVA…KDEE and IKLS…ENHK. Residues 10–17, 57–61, 119–122, 182–189, 229–233, and 294–297 each bind GTP; these read GRPNVGKS, DTGGI, NKVD, DTAGM, and NKWD. Residues 352–436 form the KH-like domain; sequence KRVQSSTLNE…PIRIIPRKRN (85 aa).

This sequence belongs to the TRAFAC class TrmE-Era-EngA-EngB-Septin-like GTPase superfamily. EngA (Der) GTPase family. In terms of assembly, associates with the 50S ribosomal subunit.

Its function is as follows. GTPase that plays an essential role in the late steps of ribosome biogenesis. The polypeptide is GTPase Der (Staphylococcus carnosus (strain TM300)).